We begin with the raw amino-acid sequence, 647 residues long: Protein FAM161B (647 aa).

Disordered regions lie at residues 1 to 39, 89 to 110, and 135 to 167; these read MTVGRPEGAPGGAEGSRQIFPPESFADTEAGEELSGDGL, SDPESDENLSEDEEDLESFFQD, and LNNLPSNIPRPQTQPPSGSRPPSQHRSVSSWAS. The span at 91–105 shows a compositional bias: acidic residues; it reads PESDENLSEDEEDLE. Residues 262 to 292 adopt a coiled-coil conformation; the sequence is LEKEEQLKEAARQRDLAATAEAKISKQKATR. The span at 332–350 shows a compositional bias: polar residues; it reads PIASSSNRANPQPRTATRT. Disordered regions lie at residues 332–352 and 388–439; these read PIASSSNRANPQPRTATRTQQ and KRRE…RSRS. Positions 510–546 form a coiled coil; that stretch reads LEEVFKAKLKENRNNDRKRAKEYKKELEEMKQRIQTR. The interval 583-647 is disordered; the sequence is KGQGTRAVQE…QSPENLVSLA (65 aa). The span at 590–602 shows a compositional bias: basic and acidic residues; that stretch reads VQEKETKIKDFPR. The segment covering 637 to 647 has biased composition (polar residues); that stretch reads HQSPENLVSLA.

It belongs to the FAM161 family. In terms of assembly, interacts with FAM161A. In terms of tissue distribution, ubiquitously expressed.

In Homo sapiens (Human), this protein is Protein FAM161B (FAM161B).